Reading from the N-terminus, the 428-residue chain is Tyrosine--tRNA ligase (428 aa).

Tyrosine 36 provides a ligand contact to L-tyrosine. The 'HIGH' region signature appears at 41 to 50; it reads PTAPSLHAGH. The L-tyrosine site is built by tyrosine 171 and glutamine 175. A 'KMSKS' region motif is present at residues 231–235; sequence KFGKS. Lysine 234 is an ATP binding site. Residues 359–416 enclose the S4 RNA-binding domain; sequence DSIVDLLVETGLAASKGAARRNVAEGGVYVNNIRIESDEWIPQHSDFLHERWLVLRRG.

Belongs to the class-I aminoacyl-tRNA synthetase family. TyrS type 1 subfamily. In terms of assembly, homodimer.

Its subcellular location is the cytoplasm. The catalysed reaction is tRNA(Tyr) + L-tyrosine + ATP = L-tyrosyl-tRNA(Tyr) + AMP + diphosphate + H(+). Catalyzes the attachment of tyrosine to tRNA(Tyr) in a two-step reaction: tyrosine is first activated by ATP to form Tyr-AMP and then transferred to the acceptor end of tRNA(Tyr). In Mycolicibacterium fortuitum (Mycobacterium fortuitum), this protein is Tyrosine--tRNA ligase.